The following is a 196-amino-acid chain: Ribonuclease HII (196 aa).

Residues 9–196 (RLVAGVDEVG…KPVRRALGIE (188 aa)) enclose the RNase H type-2 domain. A divalent metal cation is bound by residues Asp15, Glu16, and Asp107.

The protein belongs to the RNase HII family. Mn(2+) serves as cofactor. Requires Mg(2+) as cofactor.

The protein localises to the cytoplasm. The catalysed reaction is Endonucleolytic cleavage to 5'-phosphomonoester.. Functionally, endonuclease that specifically degrades the RNA of RNA-DNA hybrids. The polypeptide is Ribonuclease HII (Aeromonas hydrophila subsp. hydrophila (strain ATCC 7966 / DSM 30187 / BCRC 13018 / CCUG 14551 / JCM 1027 / KCTC 2358 / NCIMB 9240 / NCTC 8049)).